The primary structure comprises 94 residues: Acylphosphatase (94 aa).

An Acylphosphatase-like domain is found at R8–R94. Catalysis depends on residues R23 and N41.

The protein belongs to the acylphosphatase family.

It catalyses the reaction an acyl phosphate + H2O = a carboxylate + phosphate + H(+). This is Acylphosphatase (acyP) from Mycobacterium sp. (strain JLS).